A 334-amino-acid polypeptide reads, in one-letter code: Glucokinase-like protein XF_1460 (334 aa).

18 to 23 contacts ATP; sequence ADVGGT.

Belongs to the bacterial glucokinase family.

The protein is Glucokinase-like protein XF_1460 of Xylella fastidiosa (strain 9a5c).